A 273-amino-acid chain; its full sequence is Odontogenic ameloblast-associated protein (273 aa).

A signal peptide spans 1 to 15 (MKIIILLGLIGASSS). The disordered stretch occupies residues 100 to 124 (QGGQAGQPDLSQQQTPPQTQQSASP). Residues 110–121 (SQQQTPPQTQQS) show a composition bias toward low complexity. Residues Thr-114 and Thr-118 are each glycosylated (O-linked (GalNAc...) threonine). The interval 125-127 (MSY) is interaction with ARHGEF5. O-linked (GalNAc...) threonine glycosylation is found at Thr-159, Thr-240, Thr-241, Thr-247, Thr-252, Thr-258, and Thr-267. Polar residues predominate over residues 240–252 (TTSPKPSTDNFFT). Residues 240–273 (TTSPKPSTDNFFTSGIDPTIAPEQKVKTDSLREP) form a disordered region. Residues 263–273 (QKVKTDSLREP) show a composition bias toward basic and acidic residues.

Belongs to the ODAM family. As to quaternary structure, interacts (via C-terminus) with ARHGEF5. In terms of processing, O-glycosylated. In terms of tissue distribution, highly expressed in tooth-associated epithelia. Predominantly expressed in mandible.

Its subcellular location is the secreted. The protein localises to the cytoplasm. It localises to the nucleus. Its function is as follows. Tooth-associated epithelia protein that probably plays a role in odontogenesis, the complex process that results in the initiation and generation of the tooth. May be incorporated in the enamel matrix at the end of mineralization process. Involved in the induction of RHOA activity via interaction with ARHGEF and expression of downstream factors such as ROCK. Plays a role in attachment of the junctional epithelium to the tooth surface. The polypeptide is Odontogenic ameloblast-associated protein (Odam) (Mus musculus (Mouse)).